The sequence spans 1796 residues: Y' element ATP-dependent helicase protein 1 copy 5 (1796 aa).

Positions 743–767 (AGEAASSDHDQKISRVTRKRPREPK) are disordered. Positions 797-974 (EIYMADTPSV…LQRIGLTGLA (178 aa)) constitute a Helicase ATP-binding domain. Residue 810–817 (APPGYGKT) coordinates ATP. Residues 1031 to 1180 (KLLLALFEIE…EFYGLESKKG (150 aa)) enclose the Helicase C-terminal domain. Disordered stretches follow at residues 1254 to 1278 (ANASTNATTNSSTNATTTASTNVRT) and 1294 to 1421 (TTES…DINK). Positions 1294–1397 (TTESTNSSTN…ATTTESTNAS (104 aa)) are enriched in low complexity. A compositionally biased stretch (basic and acidic residues) spans 1398–1421 (AKEDANKDGNAEDNRFHPVTDINK).

The protein belongs to the helicase family. Yeast subtelomeric Y' repeat subfamily.

In terms of biological role, catalyzes DNA unwinding and is involved in telomerase-independent telomere maintenance. The chain is Y' element ATP-dependent helicase protein 1 copy 5 (YRF1-5) from Saccharomyces cerevisiae (strain ATCC 204508 / S288c) (Baker's yeast).